Here is a 92-residue protein sequence, read N- to C-terminus: UPF0250 protein VV0902 (92 aa).

Belongs to the UPF0250 family.

The chain is UPF0250 protein VV0902 from Vibrio vulnificus (strain YJ016).